A 537-amino-acid polypeptide reads, in one-letter code: Nucleolar GTP-binding protein 2 (537 aa).

The disordered stretch occupies residues 1 to 24 (MGTYKKEKSRIGREGANEKKPGNL). The residue at position 186 (S186) is a Phosphoserine. The 162-residue stretch at 207–368 (WNELYKVIDS…LIDCPGIVPP (162 aa)) folds into the CP-type G domain. Residues 317–324 (GFPNAGKS) and 361–365 (DCPGI) contribute to the GTP site. Polar residues predominate over residues 468-486 (SSNDEINSSQKVATQQTEG). Residues 468–537 (SSNDEINSSQ…SAVDDNKNRS (70 aa)) form a disordered region. Residue T484 is modified to Phosphothreonine. S487 carries the phosphoserine modification. The span at 487 to 496 (SDQDGEEAEE) shows a compositional bias: acidic residues. A compositionally biased stretch (basic and acidic residues) spans 497–512 (EWHGISDDGKADESES).

Belongs to the TRAFAC class YlqF/YawG GTPase family. NOG2 subfamily.

The protein resides in the nucleus. The protein localises to the nucleolus. GTPase that associates with pre-60S ribosomal subunits in the nucleolus and is required for their nuclear export and maturation. The protein is Nucleolar GTP-binding protein 2 (nog2) of Schizosaccharomyces pombe (strain 972 / ATCC 24843) (Fission yeast).